Reading from the N-terminus, the 338-residue chain is UDP-3-O-acylglucosamine N-acyltransferase (338 aa).

Histidine 239 serves as the catalytic Proton acceptor.

Belongs to the transferase hexapeptide repeat family. LpxD subfamily. As to quaternary structure, homotrimer.

The enzyme catalyses a UDP-3-O-[(3R)-3-hydroxyacyl]-alpha-D-glucosamine + a (3R)-hydroxyacyl-[ACP] = a UDP-2-N,3-O-bis[(3R)-3-hydroxyacyl]-alpha-D-glucosamine + holo-[ACP] + H(+). The protein operates within bacterial outer membrane biogenesis; LPS lipid A biosynthesis. Catalyzes the N-acylation of UDP-3-O-acylglucosamine using 3-hydroxyacyl-ACP as the acyl donor. Is involved in the biosynthesis of lipid A, a phosphorylated glycolipid that anchors the lipopolysaccharide to the outer membrane of the cell. This is UDP-3-O-acylglucosamine N-acyltransferase from Xylella fastidiosa (strain M23).